Here is a 415-residue protein sequence, read N- to C-terminus: Multidrug resistance protein MdtA (415 aa).

Residues 1–21 form the signal peptide; that stretch reads MKGSYKSRWVIVIVVVIAAIA. 2 disordered regions span residues 32 to 59 and 392 to 415; these read SRSAAPGATKQAQQSPAGGRRGMRSGPL and EAQSATTSEEKATSREYAKKGARS. Residues 399–415 are compositionally biased toward basic and acidic residues; that stretch reads SEEKATSREYAKKGARS.

This sequence belongs to the membrane fusion protein (MFP) (TC 8.A.1) family. Part of a tripartite efflux system composed of MdtA, MdtB and MdtC.

The protein localises to the cell inner membrane. In terms of biological role, the MdtABC tripartite complex confers resistance against novobiocin and deoxycholate. The sequence is that of Multidrug resistance protein MdtA from Escherichia coli O17:K52:H18 (strain UMN026 / ExPEC).